A 1294-amino-acid chain; its full sequence is Unconventional myosin-VI (1294 aa).

One can recognise a Myosin N-terminal SH3-like domain in the interval 2–53 (EDGKPVWAPHPTDGFQMGNIVDIGPDSLTIEPLNQKGKTFLALINQVFPAEE). In terms of domain architecture, Myosin motor spans 57–771 (KDVEDNCSLM…KFAEFDQIMK (715 aa)). Residue 151–158 (GESGAGKT) coordinates ATP. Position 267 is a phosphoserine (Ser-267). The interval 273-317 (YLNRGCTRYFANKETDKQILQNRKSPEYLKAGSMKDPLLDDHGDF) is responsible for slow ATPase activity. Thr-405 carries the post-translational modification Phosphothreonine. Position 604 is a phosphoserine (Ser-604). Positions 665–672 (FIRCIKPN) are actin-binding. The tract at residues 782–810 (KRVNHWLTCSRWKKVQWCSLSVIKLKNKI) is required for binding calmodulin. One can recognise an IQ domain in the interval 814-834 (AEACIKMQKTIRMWLCKRRHK). Residues 835 to 916 (PRIDGLVKVG…EELLSALQKK (82 aa)) form a three-helix bundle region. Positions 917–984 (KQQEEEAERL…EDDEKRIQAE (68 aa)) are SAH. The segment at 934-955 (EKERKRREEDEKRRRKEEEERR) is disordered. Ser-1025 carries the post-translational modification Phosphoserine. The interval 1060-1285 (KEMSEFLSRG…ESRQARPTYA (226 aa)) is interaction with TAX1BP1 and CALCOCO2/NDP52. Positions 1116–1118 (RRL) are interaction with OPTN. Ser-1155 is subject to Phosphoserine. The tract at residues 1157 to 1285 (QQNPAAQIPA…ESRQARPTYA (129 aa)) is interaction with TOM1.

Belongs to the TRAFAC class myosin-kinesin ATPase superfamily. Myosin family. As to quaternary structure, homodimer; dimerization seems to implicate the unfolding of the three-helix bundle region creating an additional calmodulin binding site, and cargo binding. Able to function as a monomer under specific conditions in vitro. Forms a complex with CFTR and DAB2 in the apical membrane of epithelial cells. Component of the DISP/DOCK7-induced septin displacement complex, at least composed of DOCK7, LRCH3 and MYO6. Binding to calmodulin through a unique insert, not found in other myosins, located in the neck region between the motor domain and the IQ domain appears to contribute to the directionality reversal. This interaction occurs only if the C-terminal lobe of calmodulin is occupied by calcium. Interaction with F-actin/ACTN1 occurs only at the apical brush border domain of the proximal tubule cells. Interacts with DAB2. In vitro, the C-terminal globular tail binds a C-terminal region of DAB2. Interacts with CFTR. Interacts with CABP5. Interacts with TOM1. Interacts with OPTN. Interacts with TAX1BP1 and CALCOCO2/NDP52. Interacts with TOM1L2. Interacts with CLIC5; may work together in a complex which also includes RDX and MYO6 to stabilize linkages between the plasma membrane and subjacent actin cytoskeleton at the base of stereocilia. Post-translationally, phosphorylation in the motor domain, induced by EGF, results in translocation of MYO6 from the cell surface to membrane ruffles and affects F-actin dynamics. Phosphorylated in vitro by p21-activated kinase (PAK). As to expression, expressed in most tissues examined including heart, brain, placenta, pancreas, spleen, thymus, prostate, testis, ovary, small intestine and colon. Highest levels in brain, pancreas, testis and small intestine. Also expressed in fetal brain and cochlea. Isoform 1 and isoform 2, containing the small insert, and isoform 4, containing neither insert, are expressed in unpolarized epithelial cells.

It localises to the golgi apparatus. It is found in the trans-Golgi network membrane. Its subcellular location is the nucleus. The protein resides in the cytoplasm. The protein localises to the perinuclear region. It localises to the membrane. It is found in the clathrin-coated pit. Its subcellular location is the cytoplasmic vesicle. The protein resides in the clathrin-coated vesicle. The protein localises to the cell projection. It localises to the filopodium. It is found in the ruffle membrane. Its subcellular location is the microvillus. The protein resides in the cytosol. The protein localises to the autophagosome. It localises to the endosome. It is found in the clathrin-coated vesicle membrane. Myosins are actin-based motor molecules with ATPase activity. Unconventional myosins serve in intracellular movements. Myosin 6 is a reverse-direction motor protein that moves towards the minus-end of actin filaments. Has slow rate of actin-activated ADP release due to weak ATP binding. Functions in a variety of intracellular processes such as vesicular membrane trafficking and cell migration. Required for the structural integrity of the Golgi apparatus via the p53-dependent pro-survival pathway. Appears to be involved in a very early step of clathrin-mediated endocytosis in polarized epithelial cells. Together with TOM1, mediates delivery of endocytic cargo to autophagosomes thereby promoting autophagosome maturation and driving fusion with lysosomes. Links TOM1 with autophagy receptors, such as TAX1BP1; CALCOCO2/NDP52 and OPTN. May act as a regulator of F-actin dynamics. As part of the DISP complex, may regulate the association of septins with actin and thereby regulate the actin cytoskeleton. May play a role in transporting DAB2 from the plasma membrane to specific cellular targets. May play a role in the extension and network organization of neurites. Required for structural integrity of inner ear hair cells. Required for the correct localization of CLIC5 and RDX at the stereocilium base. Modulates RNA polymerase II-dependent transcription. This chain is Unconventional myosin-VI, found in Homo sapiens (Human).